Here is a 206-residue protein sequence, read N- to C-terminus: Large ribosomal subunit protein uL13y (206 aa).

Belongs to the universal ribosomal protein uL13 family.

The chain is Large ribosomal subunit protein uL13y (RPL13AB) from Arabidopsis thaliana (Mouse-ear cress).